An 86-amino-acid polypeptide reads, in one-letter code: DNA-directed RNA polymerase subunit omega (86 aa).

The protein belongs to the RNA polymerase subunit omega family. In terms of assembly, the RNAP catalytic core consists of 2 alpha, 1 beta, 1 beta' and 1 omega subunit. When a sigma factor is associated with the core the holoenzyme is formed, which can initiate transcription.

The enzyme catalyses RNA(n) + a ribonucleoside 5'-triphosphate = RNA(n+1) + diphosphate. In terms of biological role, promotes RNA polymerase assembly. Latches the N- and C-terminal regions of the beta' subunit thereby facilitating its interaction with the beta and alpha subunits. In Psychrobacter arcticus (strain DSM 17307 / VKM B-2377 / 273-4), this protein is DNA-directed RNA polymerase subunit omega.